Here is a 377-residue protein sequence, read N- to C-terminus: Chaperone protein DnaJ (377 aa).

In terms of domain architecture, J spans 5–70 (DYYEVLGVGR…NKKAAYDQFG (66 aa)). A CR-type zinc finger spans residues 133-211 (GLTKELRIPT…CHGDGRVEKT (79 aa)). Residues C146, C149, C163, C166, C185, C188, C199, and C202 each contribute to the Zn(2+) site. 4 CXXCXGXG motif repeats span residues 146–153 (CDVCDGSG), 163–170 (CGTCHGQG), 185–192 (CPTCHGRG), and 199–206 (CSKCHGDG).

The protein belongs to the DnaJ family. Homodimer. The cofactor is Zn(2+).

Its subcellular location is the cytoplasm. In terms of biological role, participates actively in the response to hyperosmotic and heat shock by preventing the aggregation of stress-denatured proteins and by disaggregating proteins, also in an autonomous, DnaK-independent fashion. Unfolded proteins bind initially to DnaJ; upon interaction with the DnaJ-bound protein, DnaK hydrolyzes its bound ATP, resulting in the formation of a stable complex. GrpE releases ADP from DnaK; ATP binding to DnaK triggers the release of the substrate protein, thus completing the reaction cycle. Several rounds of ATP-dependent interactions between DnaJ, DnaK and GrpE are required for fully efficient folding. Also involved, together with DnaK and GrpE, in the DNA replication of plasmids through activation of initiation proteins. This Shewanella sp. (strain ANA-3) protein is Chaperone protein DnaJ.